Reading from the N-terminus, the 93-residue chain is Putative pterin-4-alpha-carbinolamine dehydratase (93 aa).

The protein belongs to the pterin-4-alpha-carbinolamine dehydratase family.

The catalysed reaction is (4aS,6R)-4a-hydroxy-L-erythro-5,6,7,8-tetrahydrobiopterin = (6R)-L-erythro-6,7-dihydrobiopterin + H2O. The chain is Putative pterin-4-alpha-carbinolamine dehydratase from Trichodesmium erythraeum (strain IMS101).